Here is a 126-residue protein sequence, read N- to C-terminus: Fluoride-specific ion channel FluC (126 aa).

The next 4 helical transmembrane spans lie at methionine 1 to aspartate 21, leucine 40 to alanine 60, alanine 72 to valine 92, and methionine 104 to leucine 124. Na(+) contacts are provided by glycine 79 and threonine 82.

Belongs to the fluoride channel Fluc/FEX (TC 1.A.43) family.

It localises to the cell membrane. The enzyme catalyses fluoride(in) = fluoride(out). Na(+) is not transported, but it plays an essential structural role and its presence is essential for fluoride channel function. In terms of biological role, fluoride-specific ion channel. Important for reducing fluoride concentration in the cell, thus reducing its toxicity. The sequence is that of Fluoride-specific ion channel FluC from Renibacterium salmoninarum (strain ATCC 33209 / DSM 20767 / JCM 11484 / NBRC 15589 / NCIMB 2235).